Consider the following 259-residue polypeptide: Alpha-acetolactate decarboxylase (259 aa).

This sequence belongs to the alpha-acetolactate decarboxylase family.

It carries out the reaction (2S)-2-acetolactate + H(+) = (R)-acetoin + CO2. The protein operates within polyol metabolism; (R,R)-butane-2,3-diol biosynthesis; (R,R)-butane-2,3-diol from pyruvate: step 2/3. In terms of biological role, converts acetolactate into acetoin, which can be excreted by the cells. This may be a mechanism for controlling the internal pH of cells in the stationary stage. The protein is Alpha-acetolactate decarboxylase (budA) of Raoultella terrigena (Klebsiella terrigena).